Reading from the N-terminus, the 595-residue chain is Aspartate--tRNA(Asp/Asn) ligase (595 aa).

Glu-178 contacts L-aspartate. The segment at 202 to 205 (QIFK) is aspartate. Arg-224 provides a ligand contact to L-aspartate. ATP-binding positions include 224–226 (RDE) and Gln-233. His-458 is a binding site for L-aspartate. Residue Glu-488 participates in ATP binding. Arg-495 is a binding site for L-aspartate. ATP is bound at residue 540 to 543 (GIDR).

The protein belongs to the class-II aminoacyl-tRNA synthetase family. Type 1 subfamily. In terms of assembly, homodimer.

Its subcellular location is the cytoplasm. The enzyme catalyses tRNA(Asx) + L-aspartate + ATP = L-aspartyl-tRNA(Asx) + AMP + diphosphate. Functionally, aspartyl-tRNA synthetase with relaxed tRNA specificity since it is able to aspartylate not only its cognate tRNA(Asp) but also tRNA(Asn). Reaction proceeds in two steps: L-aspartate is first activated by ATP to form Asp-AMP and then transferred to the acceptor end of tRNA(Asp/Asn). This is Aspartate--tRNA(Asp/Asn) ligase from Acaryochloris marina (strain MBIC 11017).